Here is a 203-residue protein sequence, read N- to C-terminus: Probable flagellin 1 (203 aa).

A propeptide spanning residues 1–6 (MRRRRG) is cleaved from the precursor.

The protein belongs to the archaeal flagellin family.

It localises to the archaeal flagellum. Functionally, flagellin is the subunit protein which polymerizes to form the filaments of archaeal flagella. The chain is Probable flagellin 1 (flaB1) from Aeropyrum pernix (strain ATCC 700893 / DSM 11879 / JCM 9820 / NBRC 100138 / K1).